We begin with the raw amino-acid sequence, 201 residues long: MSAAARVLPKAVTFVTGNAKKLEEVRAILGSSIPFQSLKLDLPELQGEPEDISKEKARMAASQVNGPVLVEDTCLCFNALKGLPGPYIKWFLEKIGHEGLNNLLKAYEDKSAFAMCIFSLALGPGEEPITFVGKTAGKIVPARGPNDFGWDPVFQPDGFEQTYAEMPKSVKNEISHRGKALALVKEHFASASYTVQSDNSA.

16–21 lines the ITP pocket; it reads TGNAKK. Glu44 lines the Mg(2+) pocket. Residues Lys56, 72–73, Lys89, 148–151, Lys171, and 176–177 each bind ITP; these read DT, FGWD, and HR.

This sequence belongs to the HAM1 NTPase family. Homodimer. Requires Mg(2+) as cofactor. It depends on Mn(2+) as a cofactor.

The protein localises to the cytoplasm. The catalysed reaction is ITP + H2O = IMP + diphosphate + H(+). The enzyme catalyses dITP + H2O = dIMP + diphosphate + H(+). It catalyses the reaction XTP + H2O = XMP + diphosphate + H(+). Pyrophosphatase that hydrolyzes non-canonical purine nucleotides such as inosine triphosphate (ITP), deoxyinosine triphosphate (dITP) or xanthosine 5'-triphosphate (XTP) to their respective monophosphate derivatives. The enzyme does not distinguish between the deoxy- and ribose forms. Probably excludes non-canonical purines from RNA and DNA precursor pools, thus preventing their incorporation into RNA and DNA and avoiding chromosomal lesions. The chain is Inosine triphosphate pyrophosphatase from Sorghum bicolor (Sorghum).